The primary structure comprises 592 residues: Proline--tRNA ligase (592 aa).

The protein belongs to the class-II aminoacyl-tRNA synthetase family. ProS type 1 subfamily. As to quaternary structure, homodimer.

It is found in the cytoplasm. The enzyme catalyses tRNA(Pro) + L-proline + ATP = L-prolyl-tRNA(Pro) + AMP + diphosphate. Catalyzes the attachment of proline to tRNA(Pro) in a two-step reaction: proline is first activated by ATP to form Pro-AMP and then transferred to the acceptor end of tRNA(Pro). As ProRS can inadvertently accommodate and process non-cognate amino acids such as alanine and cysteine, to avoid such errors it has two additional distinct editing activities against alanine. One activity is designated as 'pretransfer' editing and involves the tRNA(Pro)-independent hydrolysis of activated Ala-AMP. The other activity is designated 'posttransfer' editing and involves deacylation of mischarged Ala-tRNA(Pro). The misacylated Cys-tRNA(Pro) is not edited by ProRS. The protein is Proline--tRNA ligase of Corynebacterium urealyticum (strain ATCC 43042 / DSM 7109).